The primary structure comprises 74 residues: Translation initiation factor IF-1 (74 aa).

The S1-like domain maps to 1–72 (MSKEDAIEME…NKGRITYRLK (72 aa)).

This sequence belongs to the IF-1 family. Component of the 30S ribosomal translation pre-initiation complex which assembles on the 30S ribosome in the order IF-2 and IF-3, IF-1 and N-formylmethionyl-tRNA(fMet); mRNA recruitment can occur at any time during PIC assembly.

It localises to the cytoplasm. Its function is as follows. One of the essential components for the initiation of protein synthesis. Stabilizes the binding of IF-2 and IF-3 on the 30S subunit to which N-formylmethionyl-tRNA(fMet) subsequently binds. Helps modulate mRNA selection, yielding the 30S pre-initiation complex (PIC). Upon addition of the 50S ribosomal subunit IF-1, IF-2 and IF-3 are released leaving the mature 70S translation initiation complex. This Synechococcus sp. (strain JA-2-3B'a(2-13)) (Cyanobacteria bacterium Yellowstone B-Prime) protein is Translation initiation factor IF-1.